Here is a 146-residue protein sequence, read N- to C-terminus: Hemoglobin subunit beta (146 aa).

Positions 2-146 constitute a Globin domain; sequence FLTAEEKGLV…VANALAHKYH (145 aa). S44 carries the phosphoserine modification. Residue K59 is modified to N6-acetyllysine. H63 serves as a coordination point for heme b. K82 carries the N6-acetyllysine modification. H92 is a heme b binding site. An S-nitrosocysteine modification is found at C93. K144 bears the N6-acetyllysine mark.

This sequence belongs to the globin family. As to quaternary structure, heterotetramer of two alpha chains and two beta chains. Red blood cells.

Involved in oxygen transport from the lung to the various peripheral tissues. This is Hemoglobin subunit beta (HBB) from Lynx lynx (Eurasian lynx).